Reading from the N-terminus, the 122-residue chain is Small ribosomal subunit protein uS13 (122 aa).

The segment at 97–122 (PVRGQRTKTNARTRKGPARTVAGKKK) is disordered.

Belongs to the universal ribosomal protein uS13 family. In terms of assembly, part of the 30S ribosomal subunit. Forms a loose heterodimer with protein S19. Forms two bridges to the 50S subunit in the 70S ribosome.

Its function is as follows. Located at the top of the head of the 30S subunit, it contacts several helices of the 16S rRNA. In the 70S ribosome it contacts the 23S rRNA (bridge B1a) and protein L5 of the 50S subunit (bridge B1b), connecting the 2 subunits; these bridges are implicated in subunit movement. Contacts the tRNAs in the A and P-sites. The polypeptide is Small ribosomal subunit protein uS13 (Geobacter sulfurreducens (strain ATCC 51573 / DSM 12127 / PCA)).